The following is a 239-amino-acid chain: Pimeloyl-[acyl-carrier protein] methyl ester esterase (239 aa).

Substrate is bound by residues Trp20, 77 to 78 (SM), and 138 to 142 (FISLQ). The Nucleophile role is filled by Ser77. Residues Asp192 and His220 contribute to the active site. His220 contributes to the substrate binding site.

Belongs to the AB hydrolase superfamily. Carboxylesterase BioH family. In terms of assembly, monomer.

The protein localises to the cytoplasm. It catalyses the reaction 6-carboxyhexanoyl-[ACP] methyl ester + H2O = 6-carboxyhexanoyl-[ACP] + methanol + H(+). It participates in cofactor biosynthesis; biotin biosynthesis. Functionally, the physiological role of BioH is to remove the methyl group introduced by BioC when the pimeloyl moiety is complete. It allows to synthesize pimeloyl-ACP via the fatty acid synthetic pathway through the hydrolysis of the ester bonds of pimeloyl-ACP esters. This chain is Pimeloyl-[acyl-carrier protein] methyl ester esterase, found in Legionella pneumophila (strain Corby).